We begin with the raw amino-acid sequence, 501 residues long: DELTA-alicitoxin-Pse2a (501 aa).

An N-terminal signal peptide occupies residues 1-22 (MSPYFKLSSALIFLAITMEALC). Positions 23 to 35 (SPIENTSTSNKDN) are excised as a propeptide. The MACPF domain maps to 23–359 (SPIENTSTSN…GFLHFGCSYL (337 aa)). Residues 135 to 159 (AAVTNNIASSEEEVQGLSLNLKAYS) adopt a coiled-coil conformation. The region spanning 388-422 (VCKVGPEGCQHHEDCHYRAAFWCECGGPYDLARTC) is the EGF-like domain. 3 disulfides stabilise this stretch: C389/C402, C396/C410, and C412/C422.

It is found in the secreted. Its subcellular location is the nematocyst. Functionally, causes lethal toxicity to the shrimp Palaemon paucidence, and hemolytic activity toward sheep red blood cells. In Phyllodiscus semoni (Night anemone), this protein is DELTA-alicitoxin-Pse2a.